Reading from the N-terminus, the 450-residue chain is Carbamoyl phosphate synthase arginine-specific small chain (450 aa).

The N-terminal 29 residues, 1 to 29, are a transit peptide targeting the mitochondrion; it reads MFAARLFKAMPARASAFPSVNASIQSRFM. In terms of domain architecture, Glutamine amidotransferase type-1 spans 220-407; sequence HVAVIDCGVK…LDSVRKYKAS (188 aa). The active-site Nucleophile is Cys-296. Active-site residues include His-380 and Glu-382.

Belongs to the CarA family. In terms of assembly, heterodimer composed of 2 chains; the small (or glutamine) chain promotes the hydrolysis of glutamine to ammonia, which is used by the large (or ammonia) chain to synthesize carbamoyl phosphate.

The protein localises to the mitochondrion matrix. It carries out the reaction hydrogencarbonate + L-glutamine + 2 ATP + H2O = carbamoyl phosphate + L-glutamate + 2 ADP + phosphate + 2 H(+). The catalysed reaction is L-glutamine + H2O = L-glutamate + NH4(+). Its pathway is amino-acid biosynthesis; L-arginine biosynthesis; carbamoyl phosphate from bicarbonate: step 1/1. Small subunit of the arginine-specific carbamoyl phosphate synthase (CPSase). CPSase catalyzes the formation of carbamoyl phosphate from the ammonia moiety of glutamine, carbonate, and phosphate donated by ATP, the first step of the arginine biosynthetic pathway. The small subunit (glutamine amidotransferase) binds and cleaves glutamine to supply the large subunit with the substrate ammonia. The protein is Carbamoyl phosphate synthase arginine-specific small chain (cpa1) of Aspergillus oryzae (strain ATCC 42149 / RIB 40) (Yellow koji mold).